We begin with the raw amino-acid sequence, 493 residues long: Vacuolar-processing enzyme (493 aa).

An N-terminal signal peptide occupies residues 1-34; that stretch reads MAVHRSLLNKPTWCRVAFWWWMLVMVMRIQGTNG. Residues 35–53 constitute a propeptide that is removed on maturation; the sequence is KEQDSVIKLPTQEVDAESD. Residue His-176 is part of the active site. Cys-218 serves as the catalytic Nucleophile. Residues Cys-251 and Cys-265 are joined by a disulfide bond. N-linked (GlcNAc...) asparagine glycosylation is present at Asn-318. Cystine bridges form between Cys-429-Cys-459 and Cys-441-Cys-476.

This sequence belongs to the peptidase C13 family.

Functionally, asparagine-specific endopeptidase involved in the processing of vacuolar seed protein precursors into the mature forms. In Phaseolus vulgaris (Kidney bean), this protein is Vacuolar-processing enzyme.